We begin with the raw amino-acid sequence, 174 residues long: MIRNSIKSISDYPKPGILFRDVTSLMEDPEAYRATMQVLIERYSNTGITKVIGTEARGFLFGAPLALELGVGFVPVRKPGKLPREVISESYELEYGKDILEIHVDAIVEGDKVLLVDDLLATGGTIEATTKLARRLGGVVEDAAFVINLPDIGGAERLKGIGLNVFSICDFDGH.

The protein belongs to the purine/pyrimidine phosphoribosyltransferase family. As to quaternary structure, homodimer.

The protein localises to the cytoplasm. The catalysed reaction is AMP + diphosphate = 5-phospho-alpha-D-ribose 1-diphosphate + adenine. The protein operates within purine metabolism; AMP biosynthesis via salvage pathway; AMP from adenine: step 1/1. Catalyzes a salvage reaction resulting in the formation of AMP, that is energically less costly than de novo synthesis. In Photobacterium profundum (strain SS9), this protein is Adenine phosphoribosyltransferase.